Here is a 328-residue protein sequence, read N- to C-terminus: GMP reductase (328 aa).

The active-site Thioimidate intermediate is the C176. 205–228 (IIADGGIRTHGDIAKSIRFGASMI) lines the NADP(+) pocket.

Belongs to the IMPDH/GMPR family. GuaC type 2 subfamily.

The catalysed reaction is IMP + NH4(+) + NADP(+) = GMP + NADPH + 2 H(+). Functionally, catalyzes the irreversible NADPH-dependent deamination of GMP to IMP. It functions in the conversion of nucleobase, nucleoside and nucleotide derivatives of G to A nucleotides, and in maintaining the intracellular balance of A and G nucleotides. This chain is GMP reductase, found in Streptococcus pneumoniae (strain Taiwan19F-14).